Here is a 662-residue protein sequence, read N- to C-terminus: Forkhead box protein O1 (662 aa).

Disordered stretches follow at residues 1-62 (MAEA…PSAS) and 122-165 (GCLH…SRRN). Threonine 24 carries the phosphothreonine; by PKB/AKT1 or PKB/AKT2 and SGK1 modification. Positions 33-62 (SQSNSATSSPAPSGGAAANPDAAAGLPSAS) are enriched in low complexity. Positions 126–146 (PAPPQQPPPPGPLSQHPPVPP) are enriched in pro residues. A DNA-binding region (fork-head) is located at residues 167–261 (WGNLSYADLI…KSGKSPRRRA (95 aa)). DNA-binding regions lie at residues 218-225 (NSIRHNLS) and 241-244 (SSWW). At serine 219 the chain carries Phosphoserine; by STK4/MST1. 3 positions are modified to phosphoserine: serine 225, serine 241, and serine 242. A disordered region spans residues 241-342 (SSWWMLNPEG…GRLSPIMTEQ (102 aa)). 2 positions are modified to N6-acetyllysine: lysine 252 and lysine 255. Serine 256 carries the phosphoserine; by CDK1 modification. Omega-N-methylarginine; by PRMT1 is present on residues arginine 258 and arginine 260. A Nuclear localization signal motif is present at residues 258–260 (RRR). A Phosphoserine; by PKB/AKT1 and SGK1 modification is found at serine 263. 3 positions are modified to N6-acetyllysine: lysine 269, lysine 272, and lysine 281. Positions 271-282 (AKSRGRAAKKKA) are enriched in basic residues. Residues 290-570 (GAGDSPGSQF…RLTQEKTALQ (281 aa)) are sufficient for interaction with NLK. Phosphoserine is present on residues serine 294 and serine 305. Over residues 316–333 (NWSTFRPRTSSNASTISG) the composition is skewed to polar residues. The residue at position 326 (serine 326) is a Phosphoserine; by PKB/AKT1. Serine 329 bears the Phosphoserine; by CK1 and SGK1 mark. Serine 332 is modified (phosphoserine; by CK1). At serine 336 the chain carries Phosphoserine; by DYRK1A. Threonine 340 carries the post-translational modification Phosphothreonine. Residues 370 to 466 (SEISNPENME…GGMAQYNCAA (97 aa)) are required for interaction with RUNX2. Position 430 is an N6-acetyllysine (lysine 430). The Required for interaction with SIRT1 motif lies at 469–473 (LKELL).

In terms of assembly, interacts with LRPPRC. Interacts with RUNX2; the interaction inhibits RUNX2 transcriptional activity and mediates the IGF1/insulin-dependent BGLAP expression in osteoblasts Interacts with PPP2R1A; the interaction regulates the dephosphorylation of FOXO1 at Thr-24 and Ser-263 leading to its nuclear import. Interacts with NLK. Interacts with SIRT1; the interaction results in the deacetylation of FOXO1 leading to activation of FOXO1-mediated transcription of genes involved in DNA repair and stress resistance. Binds to CDK1. Interacts with the 14-3-3 proteins, YWHAG and YWHAZ; the interactions require insulin-stimulated phosphorylation on Thr-24, promote nuclear exit and loss of transcriptional activity. Interacts with SKP2; the interaction ubiquitinates FOXO1 leading to its proteasomal degradation. The interaction requires the presence of KRIT1. Interacts (via the C-terminal half) with ATF4 (via its DNA binding domain); the interaction occurs in osteoblasts, regulates glucose homeostasis via suppression of beta-cell proliferation and subsequent decrease in insulin production. Interacts with PRMT1; the interaction methylates FOXO1, prevents PKB/AKT1 phosphorylation and retains FOXO1 in the nucleus. Interacts with EP300 and CREBBP; the interactions acetylate FOXO1. Interacts with SIRT2; the interaction is disrupted in response to oxidative stress or serum deprivation, leading to increased level of acetylated FOXO1, which promotes stress-induced autophagy by stimulating E1-like activating enzyme ATG7. Interacts (acetylated form) with ATG7; the interaction is increased in response to oxidative stress or serum deprivation and promotes the autophagic process leading to cell death. Interacts (acetylated form) with PPARG. Interacts with XBP1; this interaction is direct and leads to FOXO1 ubiquitination and degradation via the proteasome pathway. Interacts (via the Fork-head domain) with CEBPA; the interaction increases when FOXO1 is deacetylated. Interacts with WDFY2. Forms a complex with WDFY2 and AKT1. Interacts with CRY1. Interacts with PPIA/CYPA; the interaction promotes FOXO1 dephosphorylation, nuclear accumulation and transcriptional activity. Interacts with TOX4; FOXO1 is required for full induction of TOX4-dependent activity and the interaction is inhibited by insulin. Interacts (when phosphorylated on Ser-263) with STUB1/CHIP. Post-translationally, phosphorylation by NLK promotes nuclear export and inhibits the transcriptional activity. In response to growth factors, phosphorylation on Thr-24, Ser-263 and Ser-326 by PKB/AKT1 promotes nuclear export and inactivation of transactivational activity. Phosphorylation on Thr-24 is required for binding 14-3-3 proteins. Phosphorylation of Ser-263 decreases DNA-binding activity and promotes the phosphorylation of Thr-24 and Ser-326, permitting phosphorylation of Ser-329 and Ser-332, probably by CDK1, leading to nuclear exclusion and loss of function. Stress signals, such as response to oxygen or nitric oxide, attenuate the PKB/AKT1-mediated phosphorylation leading to nuclear retention. Phosphorylation of Ser-336 is independent of IGF1 and leads to reduced function. Dephosphorylated on Thr-24 and Ser-263 by PP2A in beta-cells under oxidative stress leading to nuclear retention. Phosphorylation of Ser-256 by CDK1 disrupts binding of 14-3-3 proteins leading to nuclear accumulation and has no effect on DNA binding nor transcriptional activity. Phosphorylation by STK4/MST1 on Ser-219, upon oxidative stress, inhibits binding to 14-3-3 proteins and nuclear export. PPIA/CYPA promotes its dephosphorylation on Ser-263. Ubiquitinated by SKP2. Ubiquitination leads to proteasomal degradation. Ubiquitinated by STUB1/CHIP; when Ser-263 is phosphorylated. In terms of processing, methylation inhibits AKT1-mediated phosphorylation at Ser-263 and is increased by oxidative stress. Post-translationally, acetylated. Acetylation at Lys-269 and Lys-281 are necessary for autophagic cell death induction. Deacetylated by SIRT2 in response to oxidative stress or serum deprivation, thereby negatively regulating FOXO1-mediated autophagic cell death. Once in the nucleus, acetylated by CREBBP/EP300. Acetylation diminishes the interaction with target DNA and attenuates the transcriptional activity. It increases the phosphorylation at Ser-263. Deacetylation by SIRT1 results in reactivation of the transcriptional activity. Oxidative stress by hydrogen peroxide treatment appears to promote deacetylation and uncoupling of insulin-induced phosphorylation. By contrast, resveratrol acts independently of acetylation. Acetylated at Lys-430, promoting its localization to the nucleus and transcription factor activity. Deacetylation at Lys-430 by SIRT6, promotes its translocation into the cytoplasm, preventing its transcription factor activity. Deacetylation and subsequent inhibition by SIRT6 has different effects depending on cell types: it inhibits gluconeogenesis in hepatocytes, promotes glucose sensing in pancreatic beta-cells and regulates lipid catabolism in brown adipocytes. Highly in subcutaneous adipose and visceral adipose tissues. Levels higher in piglets than in adults. Also expressed at lower levels in liver and muscle.

It is found in the cytoplasm. It localises to the nucleus. Its function is as follows. Transcription factor that is the main target of insulin signaling and regulates metabolic homeostasis in response to oxidative stress. Binds to the insulin response element (IRE) with consensus sequence 5'-TT[G/A]TTTTG-3' and the related Daf-16 family binding element (DBE) with consensus sequence 5'-TT[G/A]TTTAC-3'. Activity suppressed by insulin. Main regulator of redox balance and osteoblast numbers and controls bone mass. Orchestrates the endocrine function of the skeleton in regulating glucose metabolism. Also acts as a key regulator of chondrogenic commitment of skeletal progenitor cells in response to lipid availability: when lipids levels are low, translocates to the nucleus and promotes expression of SOX9, which induces chondrogenic commitment and suppresses fatty acid oxidation. Acts synergistically with ATF4 to suppress osteocalcin/BGLAP activity, increasing glucose levels and triggering glucose intolerance and insulin insensitivity. Also suppresses the transcriptional activity of RUNX2, an upstream activator of osteocalcin/BGLAP. Acts as an inhibitor of glucose sensing in pancreatic beta cells by acting as a transcription repressor and suppressing expression of PDX1. In hepatocytes, promotes gluconeogenesis by acting together with PPARGC1A and CEBPA to activate the expression of genes such as IGFBP1, G6PC1 and PCK1. Also promotes gluconeogenesis by directly promoting expression of PPARGC1A and G6PC1. Important regulator of cell death acting downstream of CDK1, PKB/AKT1 and STK4/MST1. Promotes neural cell death. Mediates insulin action on adipose tissue. Regulates the expression of adipogenic genes such as PPARG during preadipocyte differentiation and, adipocyte size and adipose tissue-specific gene expression in response to excessive calorie intake. Regulates the transcriptional activity of GADD45A and repair of nitric oxide-damaged DNA in beta-cells. Required for the autophagic cell death induction in response to starvation or oxidative stress in a transcription-independent manner. Mediates the function of MLIP in cardiomyocytes hypertrophy and cardiac remodeling. Positive regulator of apoptosis in cardiac smooth muscle cells as a result of its transcriptional activation of pro-apoptotic genes. Regulates endothelial cell (EC) viability and apoptosis in a PPIA/CYPA-dependent manner via transcription of CCL2 and BCL2L11 which are involved in EC chemotaxis and apoptosis. This Sus scrofa (Pig) protein is Forkhead box protein O1 (FOXO1).